Reading from the N-terminus, the 236-residue chain is MNKTELLHEGKAKKVFLTDNKDLVIQEFKDDATAFNNKKKGTIGNKGVVNNAISCKLFTYLAEHGVSTHFVEKLSDRDMLCKRLDIILVEVVVRNTAAGSLVRRYGFEEGFRLEDPIIELYLKDDDLDDPLMNESHAVALGLANYEELELLKEQAATINTLLKTFFAGRKLNLVDFKLEFGRHNGEILLGDEISPDTCRFWDLDTGEKMDKDRFRFDLGGVEDAYTEVQHRVLDLP.

This sequence belongs to the SAICAR synthetase family.

The enzyme catalyses 5-amino-1-(5-phospho-D-ribosyl)imidazole-4-carboxylate + L-aspartate + ATP = (2S)-2-[5-amino-1-(5-phospho-beta-D-ribosyl)imidazole-4-carboxamido]succinate + ADP + phosphate + 2 H(+). The protein operates within purine metabolism; IMP biosynthesis via de novo pathway; 5-amino-1-(5-phospho-D-ribosyl)imidazole-4-carboxamide from 5-amino-1-(5-phospho-D-ribosyl)imidazole-4-carboxylate: step 1/2. The sequence is that of Phosphoribosylaminoimidazole-succinocarboxamide synthase from Chlorobium phaeobacteroides (strain BS1).